A 513-amino-acid polypeptide reads, in one-letter code: Type-2 serine--tRNA ligase (513 aa).

A312 lines the L-serine pocket. C314 is a binding site for Zn(2+). Residue R344 participates in L-serine binding. ATP is bound by residues 344 to 346 (RWE) and 355 to 356 (RV). 361–363 (RVE) contributes to the L-serine binding site. Positions 363 and 467 each coordinate Zn(2+). ATP is bound at residue R474.

It belongs to the class-II aminoacyl-tRNA synthetase family. Type-2 seryl-tRNA synthetase subfamily. In terms of assembly, homodimer. It depends on Zn(2+) as a cofactor.

Its subcellular location is the cytoplasm. It catalyses the reaction tRNA(Ser) + L-serine + ATP = L-seryl-tRNA(Ser) + AMP + diphosphate + H(+). The catalysed reaction is tRNA(Sec) + L-serine + ATP = L-seryl-tRNA(Sec) + AMP + diphosphate + H(+). Its pathway is aminoacyl-tRNA biosynthesis; selenocysteinyl-tRNA(Sec) biosynthesis; L-seryl-tRNA(Sec) from L-serine and tRNA(Sec): step 1/1. Its function is as follows. Catalyzes the attachment of serine to tRNA(Ser). Is also able to aminoacylate tRNA(Sec) with serine, to form the misacylated tRNA L-seryl-tRNA(Sec), which will be further converted into selenocysteinyl-tRNA(Sec). In Methanothermobacter thermautotrophicus (strain ATCC 29096 / DSM 1053 / JCM 10044 / NBRC 100330 / Delta H) (Methanobacterium thermoautotrophicum), this protein is Type-2 serine--tRNA ligase (serS).